Here is a 295-residue protein sequence, read N- to C-terminus: Caffeine dehydrogenase subunit beta (295 aa).

The FAD-binding PCMH-type domain occupies 1–178 (MKPTAFDYIR…CEIRIPVPSQ (178 aa)). FAD is bound by residues 32–36 (AGGQS) and 111–115 (TLGGN).

Heterotrimer composed of an alpha (CdhA), a beta (CdhB) and a gamma (CdhC) subunit.

The enzyme catalyses caffeine + a ubiquinone + H2O = 1,3,7-trimethylurate + a ubiquinol. It carries out the reaction ubiquinone-0 + caffeine + H2O = ubiquinol-0 + 1,3,7-trimethylurate. The catalysed reaction is theobromine + a ubiquinone + H2O = 3,7-dimethylurate + a ubiquinol. Its function is as follows. Component of the caffeine dehydrogenase complex that catalyzes the hydrolytical oxidation of 1,3,7-trimethylxanthine (caffeine) by incorporation of an oxygen atom originating from a water molecule into position C-8 to produce 1,3,7-trimethyluric acid (TMU). Coenzyme Q0 (ubiquinone-0) is the preferred electron acceptor and, to a lesser extent, coenzyme Q2 (ubiquinone-2) can also be used, but oxygen and NAD(P)(+) cannot. Is involved in a caffeine degradation pathway that allows Pseudomonas sp. strain CBB1 to grow on caffeine as the sole carbon and nitrogen source. Is also active with theobromine as substrate, but shows a very poor activity with theophylline and is not active with xanthine, 3-methylxanthine, 7-methylxanthine, TMU, and 3,7-dimethylurate. This chain is Caffeine dehydrogenase subunit beta, found in Pseudomonas sp. (strain CBB1).